A 225-amino-acid polypeptide reads, in one-letter code: Ribosome maturation factor RimM (225 aa).

The PRC barrel domain occupies 144–225 (ADEFYWVDLI…RIVVDWEADY (82 aa)).

Belongs to the RimM family. In terms of assembly, binds ribosomal protein uS19.

The protein resides in the cytoplasm. In terms of biological role, an accessory protein needed during the final step in the assembly of 30S ribosomal subunit, possibly for assembly of the head region. Essential for efficient processing of 16S rRNA. May be needed both before and after RbfA during the maturation of 16S rRNA. It has affinity for free ribosomal 30S subunits but not for 70S ribosomes. In Burkholderia lata (strain ATCC 17760 / DSM 23089 / LMG 22485 / NCIMB 9086 / R18194 / 383), this protein is Ribosome maturation factor RimM.